A 1165-amino-acid polypeptide reads, in one-letter code: uncharacterized protein (1165 aa).

The disordered stretch occupies residues 422 to 442 (EAAPPRPPRKSKAPEPTGDKA).

This is an uncharacterized protein from Frog virus 3 (isolate Goorha) (FV-3).